Reading from the N-terminus, the 310-residue chain is Acetyl-coenzyme A carboxylase carboxyl transferase subunit beta, chloroplastic (310 aa).

The region spanning L47–N310 is the CoA carboxyltransferase N-terminal domain. 4 residues coordinate Zn(2+): C51, C54, C70, and C73. A C4-type zinc finger spans residues C51–C73.

The protein belongs to the AccD/PCCB family. In terms of assembly, acetyl-CoA carboxylase is a heterohexamer composed of biotin carboxyl carrier protein, biotin carboxylase and 2 subunits each of ACCase subunit alpha and ACCase plastid-coded subunit beta (accD). Zn(2+) is required as a cofactor.

The protein localises to the plastid. It localises to the chloroplast stroma. It carries out the reaction N(6)-carboxybiotinyl-L-lysyl-[protein] + acetyl-CoA = N(6)-biotinyl-L-lysyl-[protein] + malonyl-CoA. The protein operates within lipid metabolism; malonyl-CoA biosynthesis; malonyl-CoA from acetyl-CoA: step 1/1. Component of the acetyl coenzyme A carboxylase (ACC) complex. Biotin carboxylase (BC) catalyzes the carboxylation of biotin on its carrier protein (BCCP) and then the CO(2) group is transferred by the transcarboxylase to acetyl-CoA to form malonyl-CoA. This chain is Acetyl-coenzyme A carboxylase carboxyl transferase subunit beta, chloroplastic, found in Adiantum capillus-veneris (Maidenhair fern).